Reading from the N-terminus, the 146-residue chain is Hemoglobin subunit beta (146 aa).

Val1 carries the post-translational modification N-acetylvaline. The Globin domain maps to 2–146; it reads HLTAEEKNAI…VANALAHKYH (145 aa). Residue Thr12 is modified to Phosphothreonine. An N6-acetyllysine modification is found at Lys59. A heme b-binding site is contributed by His63. Position 82 is an N6-acetyllysine (Lys82). A heme b-binding site is contributed by His92. Cys93 bears the S-nitrosocysteine mark. Lys144 bears the N6-acetyllysine mark.

The protein belongs to the globin family. As to quaternary structure, heterotetramer of two alpha chains and two beta chains. Red blood cells.

In terms of biological role, involved in oxygen transport from the lung to the various peripheral tissues. The sequence is that of Hemoglobin subunit beta (HBB) from Osphranter rufus (Red kangaroo).